The primary structure comprises 345 residues: MKPWAAFHLIFLVASSLEGEVSNYGTGGTQDTEPTCRTEHQCTRDKIILQSQPGIPGIPGVPGTNGSEGLKGDPGPQGPPGIRGPDGIRGEAGPKGDKGDQGDKGDKGDKGDKGEDCNLDGCLPTEVRNCQDLLEHGEILNGWYTIYPTKENPMVVFCDMETDGGGWLVFQRRQDGSVDFYLDWESYKKGFGKQESEFWLGNDKIHLLTSSGTQQLRIDLEDFEGSRTFAKYSSFSIGDENEKYRLIVGSYLDGSMNDSFRIHNGHSFSTKDRDNDTNKGNCAMMYKGAWWYFHCHHANLNGLYYKGKHANYADGINWRSGKGYYYSYKYADMKIRPQQSETTVS.

The first 19 residues, 1–19 (MKPWAAFHLIFLVASSLEG), serve as a signal peptide directing secretion. The segment at 48 to 118 (ILQSQPGIPG…DKGDKGEDCN (71 aa)) is disordered. One can recognise a Collagen-like domain in the interval 57-114 (GIPGVPGTNGSEGLKGDPGPQGPPGIRGPDGIRGEAGPKGDKGDQGDKGDKGDKGDKG). Over residues 86–116 (DGIRGEAGPKGDKGDQGDKGDKGDKGDKGED) the composition is skewed to basic and acidic residues. In terms of domain architecture, Fibrinogen C-terminal spans 121–339 (GCLPTEVRNC…YADMKIRPQQ (219 aa)). 2 cysteine pairs are disulfide-bonded: Cys130-Cys158 and Cys282-Cys295.

It belongs to the ficolin lectin family. Veficolin subfamily. Hydroxylated, possibly at Pro-80. In terms of tissue distribution, expressed by the venom duct.

It is found in the secreted. Initiates complement activation and/or interferes in platelet aggregation and/or blood coagulation. The protein is Ryncolin-1 of Cerberus rynchops (Dog-faced water snake).